The chain runs to 110 residues: Prothymosin alpha (110 aa).

An N-acetylmethionine modification is found at M1. The interval 1–110 (MSDAAVDTSS…TKKQKTDEDD (110 aa)) is disordered. N-acetylserine; in Prothymosin alpha, N-terminally processed is present on S2. The residue at position 2 (S2) is a Phosphoserine. T8 is subject to Phosphothreonine; by CK2. A phosphoserine mark is found at S9 and S10. T13 and T14 each carry phosphothreonine; by CK2. The segment covering 13-31 (TTKDLKEKKEVVEEAENGR) has biased composition (basic and acidic residues). K15 carries the post-translational modification N6-acetyllysine; alternate. An N6-succinyllysine; alternate modification is found at K15. Low complexity predominate over residues 32–41 (EAPANGNANE). Residues 42 to 83 (ENGEQEADNEVDEEEEEGGEEEEEEEEGDGEEEDGDEDEEAE) are compositionally biased toward acidic residues. A compositionally biased stretch (basic and acidic residues) spans 100–110 (DTKKQKTDEDD). Phosphothreonine is present on T101. K102 is subject to N6-acetyllysine; alternate. Residue K102 forms a Glycyl lysine isopeptide (Lys-Gly) (interchain with G-Cter in SUMO2); alternate linkage. A Phosphothreonine modification is found at T106.

This sequence belongs to the pro/parathymosin family. As to quaternary structure, interacts with NUPR1; regulates apoptotic process. In terms of processing, covalently linked to a small RNA of about 20 nucleotides.

The protein resides in the nucleus. Functionally, prothymosin alpha may mediate immune function by conferring resistance to certain opportunistic infections. The sequence is that of Prothymosin alpha (PTMA) from Bos taurus (Bovine).